The primary structure comprises 484 residues: Diaminopimelate decarboxylase 1, chloroplastic (484 aa).

Polar residues predominate over residues 1 to 28 (MAAATQFLSQPSSLNPHQLKNQTSQRSR). The interval 1-30 (MAAATQFLSQPSSLNPHQLKNQTSQRSRSI) is disordered. A chloroplast-targeting transit peptide spans 1–49 (MAAATQFLSQPSSLNPHQLKNQTSQRSRSIPVLSLKSTLKPLKRLSVKA). At A50 the chain carries N-acetylalanine. K125 carries the post-translational modification N6-(pyridoxal phosphate)lysine. Pyridoxal 5'-phosphate is bound by residues G304 and 340-343 (EPGR). The substrate site is built by R343, R379, and Y383. Residue C411 is the Proton donor of the active site. Substrate-binding residues include E412 and Y440. Residue Y440 participates in pyridoxal 5'-phosphate binding.

The protein belongs to the Orn/Lys/Arg decarboxylase class-II family. LysA subfamily. In terms of assembly, homodimer. The cofactor is pyridoxal 5'-phosphate.

Its subcellular location is the plastid. The protein localises to the chloroplast. The enzyme catalyses meso-2,6-diaminopimelate + H(+) = L-lysine + CO2. Its pathway is amino-acid biosynthesis; L-lysine biosynthesis via DAP pathway; L-lysine from DL-2,6-diaminopimelate: step 1/1. In terms of biological role, specifically catalyzes the decarboxylation of meso-diaminopimelate (meso-DAP) to L-lysine. The chain is Diaminopimelate decarboxylase 1, chloroplastic (LYSA1) from Arabidopsis thaliana (Mouse-ear cress).